The sequence spans 513 residues: ATP synthase subunit alpha 1 (513 aa).

169 to 176 (GDRQCGKT) is a binding site for ATP.

The protein belongs to the ATPase alpha/beta chains family. As to quaternary structure, F-type ATPases have 2 components, CF(1) - the catalytic core - and CF(0) - the membrane proton channel. CF(1) has five subunits: alpha(3), beta(3), gamma(1), delta(1), epsilon(1). CF(0) has three main subunits: a(1), b(2) and c(9-12). The alpha and beta chains form an alternating ring which encloses part of the gamma chain. CF(1) is attached to CF(0) by a central stalk formed by the gamma and epsilon chains, while a peripheral stalk is formed by the delta and b chains.

It is found in the cell inner membrane. It catalyses the reaction ATP + H2O + 4 H(+)(in) = ADP + phosphate + 5 H(+)(out). In terms of biological role, produces ATP from ADP in the presence of a proton gradient across the membrane. The alpha chain is a regulatory subunit. The chain is ATP synthase subunit alpha 1 from Burkholderia thailandensis (strain ATCC 700388 / DSM 13276 / CCUG 48851 / CIP 106301 / E264).